A 254-amino-acid polypeptide reads, in one-letter code: Tabinhibitin 6 (254 aa).

A signal peptide spans 1-22 (MLPYWCPLLLAALVLQYATIDA). The short motif at 31–33 (RGD) is the Cell attachment site element. Residues 66-210 (LSKINDVRDH…KARALLTCNF (145 aa)) enclose the SCP domain.

The protein belongs to the CRISP family. Expressed in salivary glands.

It is found in the secreted. Its function is as follows. Inhibits platelet aggregation induced by all agonists tested (ADP, arachidonic acid, the thromboxane A2 analog U46619, thrombin, and snake venom snaclecs (TMVA that activates platelet through GPIB, and stejnulxin that specifically acts through GPVI (GP6))). May act by competing with fibrinogen for binding to glycoprotein IIb/IIIa (ITGA2B/ITGB3). In Tabanus yao (Horsefly), this protein is Tabinhibitin 6.